The chain runs to 550 residues: Transcription factor 7-like 1-C (550 aa).

Gly residues predominate over residues 1–11; that stretch reads MPQLNSGGGDE. Residues 1–60 form an interaction with CTNNB1-A region; sequence MPQLNSGGGDELGANDELIRFKDEGEQEEKSPGEGSAEDLADVKSSLVNESENHSSDSDS. Disordered stretches follow at residues 1–76, 182–206, and 390–473; these read MPQL…EKPR, GTPP…HPSE, and WSAR…SLTT. Basic and acidic residues-rich tracts occupy residues 17-32 and 51-76; these read ELIR…EKSP and SENH…EKPR. Residues 108-311 are interaction with AES and TLE4-A; the sequence is LGGITCPMVP…SPNLSRKSNV (204 aa). A DNA-binding region (HMG box) is located at residues 323-391; it reads IKKPLNAFML…LHSQLYPSWS (69 aa). Positions 406–415 are enriched in basic and acidic residues; the sequence is KQSPEMENYT. An interaction with CTBP-B region spans residues 407-550; it reads QSPEMENYTK…PLSLVTRSSD (144 aa). The segment covering 444–463 has biased composition (low complexity); it reads SPATPSAALASPAAPAATHS. Residues 464–473 show a composition bias toward polar residues; sequence EQAQPLSLTT.

It belongs to the TCF/LEF family. Interacts with csnk1e, ctnnb1-A, ctbp-B, dact1-A and gsk3b. May interact with ase and tle4-A. Phosphorylated. Phosphorylation by csnk1e promotes binding to ctnnb1-A while phosphorylation by gsk3b may reverse this effect.

It localises to the nucleus. Functionally, participates in the Wnt signaling pathway. Binds to DNA and acts as a repressor in the absence of ctnnb1-A and possibly ctnnb1-B, and as an activator in the presence of these proteins. Required early in development for the establishment of the dorsal body axis in response to maternal Wnt signaling. This Xenopus laevis (African clawed frog) protein is Transcription factor 7-like 1-C (tcf7l1-c).